The following is a 385-amino-acid chain: ATP synthase subunit a-1 (385 aa).

Residues 1 to 133 constitute a propeptide that is removed on maturation; the sequence is MRRIFLFDEN…ALNIVGQAAA (133 aa). The next 7 helical transmembrane spans lie at 154 to 174, 220 to 240, 249 to 269, 276 to 296, 316 to 336, 339 to 359, and 362 to 382; these read FSFT…LLLI, FFPC…QGMI, HFLI…IVGF, FFSF…LVLL, MMAG…MLCM, IFYF…TGLE, and VAIL…NDAI.

The protein belongs to the ATPase A chain family. As to quaternary structure, F-type ATPases have 2 components, CF(1) - the catalytic core - and CF(0) - the membrane proton channel. CF(1) has five subunits: alpha(3), beta(3), gamma(1), delta(1), epsilon(1). CF(0) has three main subunits: a, b and c.

The protein resides in the mitochondrion inner membrane. Mitochondrial membrane ATP synthase (F(1)F(0) ATP synthase or Complex V) produces ATP from ADP in the presence of a proton gradient across the membrane which is generated by electron transport complexes of the respiratory chain. F-type ATPases consist of two structural domains, F(1) - containing the extramembraneous catalytic core and F(0) - containing the membrane proton channel, linked together by a central stalk and a peripheral stalk. During catalysis, ATP synthesis in the catalytic domain of F(1) is coupled via a rotary mechanism of the central stalk subunits to proton translocation. Key component of the proton channel; it may play a direct role in the translocation of protons across the membrane. The polypeptide is ATP synthase subunit a-1 (ATP6-1) (Arabidopsis thaliana (Mouse-ear cress)).